Consider the following 251-residue polypeptide: Triosephosphate isomerase (251 aa).

9–11 (NWK) provides a ligand contact to substrate. The Electrophile role is filled by histidine 95. The active-site Proton acceptor is glutamate 167. Residues glycine 173, serine 213, and 234–235 (GG) each bind substrate. The residue at position 213 (serine 213) is a Phosphoserine.

It belongs to the triosephosphate isomerase family. Homodimer.

The protein localises to the cytoplasm. The catalysed reaction is D-glyceraldehyde 3-phosphate = dihydroxyacetone phosphate. The protein operates within carbohydrate biosynthesis; gluconeogenesis. It participates in carbohydrate degradation; glycolysis; D-glyceraldehyde 3-phosphate from glycerone phosphate: step 1/1. In terms of biological role, involved in the gluconeogenesis. Catalyzes stereospecifically the conversion of dihydroxyacetone phosphate (DHAP) to D-glyceraldehyde-3-phosphate (G3P). The chain is Triosephosphate isomerase from Bacillus cereus (strain G9842).